A 435-amino-acid polypeptide reads, in one-letter code: Cytochrome c biogenesis protein CcsB (435 aa).

The next 3 membrane-spanning stretches (helical) occupy residues 14–34, 72–92, and 162–182; these read LRLA…GTIL, SVWF…CSWR, and VGPL…AWGA.

Belongs to the Ccs1/CcsB family. May interact with CcsA.

The protein resides in the cellular thylakoid membrane. Its function is as follows. Required during biogenesis of c-type cytochromes (cytochrome c6 and cytochrome f) at the step of heme attachment. This chain is Cytochrome c biogenesis protein CcsB, found in Synechococcus sp. (strain CC9311).